The primary structure comprises 139 residues: Ribulose bisphosphate carboxylase small subunit (139 aa).

It belongs to the RuBisCO small chain family. Heterohexadecamer of 8 large and 8 small subunits.

It localises to the plastid. It is found in the chloroplast. Its function is as follows. RuBisCO catalyzes two reactions: the carboxylation of D-ribulose 1,5-bisphosphate, the primary event in carbon dioxide fixation, as well as the oxidative fragmentation of the pentose substrate in the photorespiration process. Both reactions occur simultaneously and in competition at the same active site. Although the small subunit is not catalytic it is essential for maximal activity. The polypeptide is Ribulose bisphosphate carboxylase small subunit (Detonula confervacea (Marine diatom)).